We begin with the raw amino-acid sequence, 331 residues long: Phosphate acyltransferase (331 aa).

The protein belongs to the PlsX family. As to quaternary structure, homodimer. Probably interacts with PlsY.

The protein resides in the cytoplasm. The catalysed reaction is a fatty acyl-[ACP] + phosphate = an acyl phosphate + holo-[ACP]. Its pathway is lipid metabolism; phospholipid metabolism. Catalyzes the reversible formation of acyl-phosphate (acyl-PO(4)) from acyl-[acyl-carrier-protein] (acyl-ACP). This enzyme utilizes acyl-ACP as fatty acyl donor, but not acyl-CoA. The polypeptide is Phosphate acyltransferase (Lactococcus lactis subsp. cremoris (strain SK11)).